The chain runs to 596 residues: Fructan 1-exohydrolase (596 aa).

Positions 1 to 20 (MAQAWAFLLPVLVLGSYVTS) are cleaved as a signal peptide. D75 is a catalytic residue. Residues N168, N236, and N248 are each glycosylated (N-linked (GlcNAc...) asparagine). C446 and C492 are disulfide-bonded. N-linked (GlcNAc...) asparagine glycosylation occurs at N567.

Belongs to the glycosyl hydrolase 32 family.

The catalysed reaction is Hydrolysis of terminal, non-reducing (2-&gt;1)-linked beta-D-fructofuranose residues in fructans.. Its activity is regulated as follows. Inhibited by sucrose. Its function is as follows. Hydrolyzes inulin-type beta-(2,1)-fructans. May play a role as a beta-(2,1)-trimmer during graminan biosynthesis. In Aegilops tauschii (Tausch's goatgrass), this protein is Fructan 1-exohydrolase.